We begin with the raw amino-acid sequence, 611 residues long: Probable potassium transport system protein Kup (611 aa).

Transmembrane regions (helical) follow at residues 24–44 (LVFG…FLFL), 55–75 (VSLI…FLAM), 102–122 (VAVF…ECVI), 143–163 (LIAQ…LFLF), 175–195 (FGPV…ISVA), 218–238 (LLGF…EALF), 252–272 (AWGF…AYLL), 275–295 (TDVI…LYIP), 296–316 (FLLL…SGIF), 344–364 (IYIN…LLIF), 374–394 (YGLA…AIFL), 400–420 (LYMG…LSTV), and 423–443 (ITHG…IVII).

This sequence belongs to the HAK/KUP transporter (TC 2.A.72) family.

The protein localises to the cell membrane. The catalysed reaction is K(+)(in) + H(+)(in) = K(+)(out) + H(+)(out). Transport of potassium into the cell. Likely operates as a K(+):H(+) symporter. The chain is Probable potassium transport system protein Kup from Methanospirillum hungatei JF-1 (strain ATCC 27890 / DSM 864 / NBRC 100397 / JF-1).